The primary structure comprises 373 residues: Transmembrane protein adipocyte-associated 1 (373 aa).

Asparagine 11 and asparagine 23 each carry an N-linked (GlcNAc...) asparagine glycan. A run of 7 helical transmembrane segments spans residues 48 to 68, 76 to 96, 123 to 143, 151 to 171, 192 to 212, 234 to 254, and 265 to 285; these read LLLL…LPSA, SSPI…VGIA, FFLL…GHLE, VLAI…TLEI, QFWL…VILP, ILAL…FDII, and FLYF…GFFG. Asparagine 361 is a glycosylation site (N-linked (GlcNAc...) asparagine).

The protein belongs to the UPF0359 family. As to expression, ubiquitous, with higher levels in heart, placenta and kidney.

The protein localises to the membrane. In Homo sapiens (Human), this protein is Transmembrane protein adipocyte-associated 1 (TPRA1).